Here is a 1343-residue protein sequence, read N- to C-terminus: Spermatogenesis-associated protein 31A6 (1343 aa).

Residues 23–43 (PWVLDIFLTLVFALGFFFLLL) traverse the membrane as a helical segment. Disordered regions lie at residues 55–88 (PSPSPGKRKCPVGRRRRPRGRMKNHSLRAGRECP), 106–235 (GPHL…STLI), 624–654 (DESPGTSQAKGKPSPWQSSTSTGESSKEAQK), 895–951 (PRGI…REAV), 1080–1156 (VQEE…PPSV), and 1309–1331 (KAVSPVSPPQHWPKTSGASSHHH). Residues 60–82 (GKRKCPVGRRRRPRGRMKNHSLR) are compositionally biased toward basic residues. A compositionally biased stretch (polar residues) spans 165–178 (LASTPSPGPMTTSV). Residues 198-222 (PEPPALFPHPPHTPDPLACSPPPPK) show a composition bias toward pro residues. Polar residues-rich tracts occupy residues 627–647 (PGTSQAKGKPSPWQSSTSTGE) and 923–944 (LTYSLTGSTQQSRSLGAQSSKA). Composition is skewed to basic and acidic residues over residues 1104–1123 (HKSEKSRKPNLEKHEERLEG) and 1133–1142 (RKTEDTHQDE).

Belongs to the SPATA31 family.

The protein resides in the membrane. Its function is as follows. May play a role in spermatogenesis. The protein is Spermatogenesis-associated protein 31A6 (SPATA31A6) of Homo sapiens (Human).